The following is a 277-amino-acid chain: Release factor glutamine methyltransferase (277 aa).

S-adenosyl-L-methionine is bound by residues 119–123 (GTGCG), Asp142, Trp170, and Asn184. 184 to 187 (NPPY) is a binding site for substrate.

It belongs to the protein N5-glutamine methyltransferase family. PrmC subfamily.

The catalysed reaction is L-glutaminyl-[peptide chain release factor] + S-adenosyl-L-methionine = N(5)-methyl-L-glutaminyl-[peptide chain release factor] + S-adenosyl-L-homocysteine + H(+). Its function is as follows. Methylates the class 1 translation termination release factors RF1/PrfA and RF2/PrfB on the glutamine residue of the universally conserved GGQ motif. The chain is Release factor glutamine methyltransferase from Buchnera aphidicola subsp. Baizongia pistaciae (strain Bp).